A 167-amino-acid chain; its full sequence is Endoribonuclease YbeY (167 aa).

The Zn(2+) site is built by histidine 131, histidine 135, and histidine 141.

Belongs to the endoribonuclease YbeY family. Zn(2+) serves as cofactor.

The protein resides in the cytoplasm. Single strand-specific metallo-endoribonuclease involved in late-stage 70S ribosome quality control and in maturation of the 3' terminus of the 16S rRNA. The chain is Endoribonuclease YbeY from Rickettsia rickettsii (strain Sheila Smith).